Reading from the N-terminus, the 483-residue chain is Glutamyl-tRNA(Gln) amidotransferase subunit A (483 aa).

Catalysis depends on charge relay system residues Lys-75 and Ser-150. Ser-174 acts as the Acyl-ester intermediate in catalysis.

Belongs to the amidase family. GatA subfamily. As to quaternary structure, heterotrimer of A, B and C subunits.

It catalyses the reaction L-glutamyl-tRNA(Gln) + L-glutamine + ATP + H2O = L-glutaminyl-tRNA(Gln) + L-glutamate + ADP + phosphate + H(+). Its function is as follows. Allows the formation of correctly charged Gln-tRNA(Gln) through the transamidation of misacylated Glu-tRNA(Gln) in organisms which lack glutaminyl-tRNA synthetase. The reaction takes place in the presence of glutamine and ATP through an activated gamma-phospho-Glu-tRNA(Gln). This chain is Glutamyl-tRNA(Gln) amidotransferase subunit A, found in Gloeothece citriformis (strain PCC 7424) (Cyanothece sp. (strain PCC 7424)).